Consider the following 114-residue polypeptide: Eukaryotic translation initiation factor 6 (114 aa).

The protein belongs to the eIF-6 family. In terms of assembly, monomer. Associates with the 60S ribosomal subunit.

It is found in the cytoplasm. The protein resides in the nucleus. The protein localises to the nucleolus. Binds to the 60S ribosomal subunit and prevents its association with the 40S ribosomal subunit to form the 80S initiation complex in the cytoplasm. May also be involved in ribosome biogenesis. The chain is Eukaryotic translation initiation factor 6 from Trypanosoma cruzi.